Reading from the N-terminus, the 419-residue chain is Acyl-[acyl-carrier-protein] hydrolase FATB1, chloroplastic (419 aa).

The transit peptide at 1–50 directs the protein to the chloroplast; the sequence is MVAAAATSAFFPVPAPGTSPKPGKSGNWPSSLSPTFKPKSIPNGGFQVKA. The interval 1–84 is disordered; that stretch reads MVAAAATSAF…DTSSSPPPRA (84 aa). The span at 61-78 shows a compositional bias: polar residues; sequence SAVNLKSGSLNTQEDTSS. Catalysis depends on residues N315, H317, and C352. The segment at 390–419 is disordered; the sequence is SRTEWRPKNAGTNGAISTSTAKTSNGNSVS. Polar residues predominate over residues 399–419; it reads AGTNGAISTSTAKTSNGNSVS.

The protein belongs to the acyl-ACP thioesterase family.

The protein resides in the plastid. The protein localises to the chloroplast. It carries out the reaction octanoyl-[ACP] + H2O = octanoate + holo-[ACP] + H(+). It catalyses the reaction decanoyl-[ACP] + H2O = decanoate + holo-[ACP] + H(+). Plays an essential role in chain termination during de novo fatty acid synthesis. Possesses thioesterase activity for short chain acyl-ACPs. Substrate preference is 8:0 &gt; 10:0. The protein is Acyl-[acyl-carrier-protein] hydrolase FATB1, chloroplastic of Cuphea viscosissima (Blue waxweed).